A 450-amino-acid chain; its full sequence is Cyclin-A2-3 (450 aa).

2 disordered regions span residues 18–53 and 75–94; these read ALRA…NKRK and NSKQ…SQLA. Over residues 23 to 34 the composition is skewed to polar residues; the sequence is EVTSTTQNQQRV.

This sequence belongs to the cyclin family. Cyclin AB subfamily. Interacts with CDKA-1. Interacts with SAMBA.

The protein resides in the nucleus. Its function is as follows. Negatively regulates endocycles and acts as a regulator of ploidy levels in endoreduplication. Promotes divisions in the guard cells (GCs) after the guard mother cells (GMC) symmetric division. This is Cyclin-A2-3 (CYCA2-3) from Arabidopsis thaliana (Mouse-ear cress).